Consider the following 243-residue polypeptide: Vesicle-associated membrane protein-associated protein B (243 aa).

A2 carries the N-acetylalanine modification. At 2-218 the chain is on the cytoplasmic side; it reads AKVEQVLSLE…PAPATPGKEE (217 aa). Residues 7–124 enclose the MSP domain; sequence VLSLEPQHEL…MDSKLRCVFE (118 aa). S146 carries the phosphoserine modification. K147 participates in a covalent cross-link: Glycyl lysine isopeptide (Lys-Gly) (interchain with G-Cter in SUMO1). At T150 the chain carries Phosphothreonine. Phosphoserine occurs at positions 158 and 159. A coiled-coil region spans residues 161–196; sequence LDDTEVKKVMEECKRLQSEVQRLREENKQLKEEDGL. Over residues 185–197 the composition is skewed to basic and acidic residues; that stretch reads EENKQLKEEDGLR. The tract at residues 185 to 217 is disordered; it reads EENKQLKEEDGLRMRKPVLSNSPAPAPATPGKE. At S206 the chain carries Phosphoserine. A helical; Anchor for type IV membrane protein membrane pass occupies residues 219–239; sequence GLSTRLLALVVLFFIVGVIIG.

This sequence belongs to the VAMP-associated protein (VAP) (TC 9.B.17) family. Homodimer, and heterodimer with VAPA. Interacts with VAMP1 and VAMP2. Interacts (via MSP domain) with ZFYVE27. Interacts with RMDN3. Interacts with KIF5A in a ZFYVE27-dependent manner. Interacts (via MSP domain) with STARD3 (via phospho-FFAT motif). Interacts with STARD3NL (via FFAT motif). Interacts with CERT1. Interacts with PLEKHA3 and SACM1L to form a ternary complex. Interacts with VPS13A (via FFAT motif). Interacts with RB1CC1 (via phosphorylated FFAT motif), MIGA2 (via phosphorylated FFAT motif), RMDN3 (via phosphorylated FFAT motif), OSBPL1A (via FFAT motif), KCNB1 (via phosphorylated FFAT motif) and KCNB2 (via phosphorylated FFAT motif). Interacts (via MSP domain) with WDR44 (via FFAT motif); the interactions connect the endoplasmic reticulum (ER) with the endosomal tubule.

The protein resides in the endoplasmic reticulum membrane. Endoplasmic reticulum (ER)-anchored protein that mediates the formation of contact sites between the ER and endosomes via interaction with FFAT motif-containing proteins such as STARD3 or WDR44. Interacts with STARD3 in a FFAT motif phosphorylation dependent manner. Via interaction with WDR44 participates in neosynthesized protein export. Participates in the endoplasmic reticulum unfolded protein response (UPR) by inducing ERN1/IRE1 activity. Involved in cellular calcium homeostasis regulation. This chain is Vesicle-associated membrane protein-associated protein B, found in Sus scrofa (Pig).